A 338-amino-acid polypeptide reads, in one-letter code: Cytochrome c biogenesis protein CcsA (338 aa).

8 consecutive transmembrane segments (helical) span residues 11-31 (VLLD…YWLA), 39-59 (LLHE…TGLL), 76-96 (ESLF…EAFA), 100-120 (LVGV…SLTL), 145-165 (VMIL…AFLI), 244-264 (LIGL…VWAN), 278-295 (TWSL…HARI), and 305-325 (ATLA…VNFL).

Belongs to the CcmF/CycK/Ccl1/NrfE/CcsA family. In terms of assembly, may interact with ccs1.

It is found in the cell inner membrane. Required during biogenesis of c-type cytochromes (cytochrome c6 and cytochrome f) at the step of heme attachment. This chain is Cytochrome c biogenesis protein CcsA, found in Gloeobacter violaceus (strain ATCC 29082 / PCC 7421).